Consider the following 298-residue polypeptide: tRNA dimethylallyltransferase 2 (298 aa).

An ATP-binding site is contributed by 10–17 (GPTASGKT). Residue 12 to 17 (TASGKT) coordinates substrate. The interval 35 to 38 (DSRQ) is interaction with substrate tRNA.

It belongs to the IPP transferase family. Monomer. The cofactor is Mg(2+).

It catalyses the reaction adenosine(37) in tRNA + dimethylallyl diphosphate = N(6)-dimethylallyladenosine(37) in tRNA + diphosphate. Catalyzes the transfer of a dimethylallyl group onto the adenine at position 37 in tRNAs that read codons beginning with uridine, leading to the formation of N6-(dimethylallyl)adenosine (i(6)A). The sequence is that of tRNA dimethylallyltransferase 2 from Syntrophotalea carbinolica (strain DSM 2380 / NBRC 103641 / GraBd1) (Pelobacter carbinolicus).